The primary structure comprises 177 residues: MSELTTIARPYAKAAFELAVEKGTIESWNEMLFFAGHVASNEKASALLAGMPTATTQAELFIQICAEQLNEQGQNLVKVMAENGRLIALPAVAQLFAKFKAEYDKEIDVDVISATPLVAAQQESLVAALEKRFARKVKLNCSEDAAVVGGLIIKAGDTVIDGSIRGKLNRLATTLQS.

This sequence belongs to the ATPase delta chain family. In terms of assembly, F-type ATPases have 2 components, F(1) - the catalytic core - and F(0) - the membrane proton channel. F(1) has five subunits: alpha(3), beta(3), gamma(1), delta(1), epsilon(1). F(0) has three main subunits: a(1), b(2) and c(10-14). The alpha and beta chains form an alternating ring which encloses part of the gamma chain. F(1) is attached to F(0) by a central stalk formed by the gamma and epsilon chains, while a peripheral stalk is formed by the delta and b chains.

Its subcellular location is the cell inner membrane. In terms of biological role, f(1)F(0) ATP synthase produces ATP from ADP in the presence of a proton or sodium gradient. F-type ATPases consist of two structural domains, F(1) containing the extramembraneous catalytic core and F(0) containing the membrane proton channel, linked together by a central stalk and a peripheral stalk. During catalysis, ATP synthesis in the catalytic domain of F(1) is coupled via a rotary mechanism of the central stalk subunits to proton translocation. Functionally, this protein is part of the stalk that links CF(0) to CF(1). It either transmits conformational changes from CF(0) to CF(1) or is implicated in proton conduction. This chain is ATP synthase subunit delta, found in Pseudoalteromonas translucida (strain TAC 125).